The primary structure comprises 413 residues: Porin PorA (413 aa).

Residues 1–22 (MKKVVSSLLIILGAAMLIFAIA) form the signal peptide. Residues 265–288 (TKSAADSKDDKKKDGDKKDEKSPE) are disordered.

This sequence belongs to the PorA family.

The protein resides in the secreted. The protein localises to the cell wall. Forms water-filled channels that favor the permeation of cations. The chain is Porin PorA from Corynebacterium resistens (strain DSM 45100 / JCM 12819 / GTC 2026 / SICGH 158).